A 393-amino-acid chain; its full sequence is Autophagy-related protein 18c (393 aa).

4 WD repeats span residues 27-65 (KEEA…ETFR), 70-114 (DGGF…CISE), 199-239 (AHDS…RLQE), and 244-283 (VDRA…VGED).

Belongs to the WD repeat PROPPIN family. Component of the PI(3,5)P2 regulatory complex at least composed of ATG18, SAC/FIG4, FAB1 and VAC14. In terms of tissue distribution, expressed in roots, stems, flowers and leaves.

Its subcellular location is the preautophagosomal structure membrane. It is found in the vacuole membrane. In terms of biological role, the PI(3,5)P2 regulatory complex regulates both the synthesis and turnover of phosphatidylinositol 3,5-bisphosphate (PtdIns(3,5)P2). Required for autophagy. The polypeptide is Autophagy-related protein 18c (ATG18C) (Arabidopsis thaliana (Mouse-ear cress)).